A 301-amino-acid chain; its full sequence is Protoheme IX farnesyltransferase (301 aa).

Transmembrane regions (helical) follow at residues 16-36, 41-61, 93-113, 114-134, 141-161, 172-192, 217-237, 238-258, and 273-293; these read VVAL…PGIP, IQSG…AAAI, VFAG…VNLI, TAVL…VYLK, IVIG…AVTG, SLLV…LAIF, QILL…ATGM, SGVF…WYAW, and FGYS…DHWL.

It belongs to the UbiA prenyltransferase family. Protoheme IX farnesyltransferase subfamily.

The protein resides in the cell inner membrane. The enzyme catalyses heme b + (2E,6E)-farnesyl diphosphate + H2O = Fe(II)-heme o + diphosphate. The protein operates within porphyrin-containing compound metabolism; heme O biosynthesis; heme O from protoheme: step 1/1. In terms of biological role, converts heme B (protoheme IX) to heme O by substitution of the vinyl group on carbon 2 of heme B porphyrin ring with a hydroxyethyl farnesyl side group. The chain is Protoheme IX farnesyltransferase from Xylella fastidiosa (strain 9a5c).